A 621-amino-acid chain; its full sequence is tRNA uridine 5-carboxymethylaminomethyl modification enzyme MnmG (621 aa).

Position 17 to 22 (17 to 22 (GGGHAG)) interacts with FAD. 276–290 (GPRYCPSIEDKIMKF) contacts NAD(+).

This sequence belongs to the MnmG family. Homodimer. Heterotetramer of two MnmE and two MnmG subunits. FAD serves as cofactor.

Its subcellular location is the cytoplasm. Its function is as follows. NAD-binding protein involved in the addition of a carboxymethylaminomethyl (cmnm) group at the wobble position (U34) of certain tRNAs, forming tRNA-cmnm(5)s(2)U34. This chain is tRNA uridine 5-carboxymethylaminomethyl modification enzyme MnmG, found in Zymomonas mobilis subsp. mobilis (strain ATCC 31821 / ZM4 / CP4).